The sequence spans 728 residues: MQSQSVMLELREQDEVWVRLYKGERENAVFSDEYDTYITFSGHLINFQPAAEPLGTTVLHAAVDTRPQPARYFDTGTTEPVSFFLSGLEELLAWHPSSDDEFNVCAVPLAQRQPPLHSRRPRTLLCHDMRGGYLEDRFIQGSATRNPYVFYHWRYVDIFVYFSHHTVTIPPVCWTNAAHRNGVPVLGTFITEWADGEKLCEAFLAGGEDAYRAVSHQLARIAQHYRFDGWLINIENALSAAAVGNLSPFLRHLTAEVHGAVPGGLVIWYDSILESGTLRWQNELNQQNRVFFDACDGLFVNYNWKEEHLERTRELAGQRHADVYIGVDVFARGDVVGGGFDTNKSLSLIRKHGLSAAIFAPGWVYKHLGEENFLLNEDKFWGLLEDYLPTHSICTLPLATSFSVGMGTGMFLAGKEEEAGPWYNLSAQEIQPLYPERRGWLSTSCCLQDAWCGGSSLRVQGTIPPGEERVAIRLSLWVDLGSSGFSLSICGTLASGPHRDDFTVALELTTWHSSRCHDGTVTVLPSEDEPHGRHHPHLLPAPPPALSRMLAACSHGAQGWTSRCYEQELRGCSLRDLSLLVSRQQASPQETSFSCLLGELRVLDAGSMAASPPQVQSLTASQLWWQDGPSAEQLSLSLTLRWAFPPGRAACFRVLSQGARCHRAQPAQPQLLGLAHGCQYRAVGLAVPRPAPGQSCQLELLVEPVLPSELPVGPERWGRLLLVYSEPA.

A BRCT domain is found at 287-381 (QNRVFFDACD…NFLLNEDKFW (95 aa)).

Belongs to the glycosyl hydrolase 85 family.

Its subcellular location is the cytoplasm. The protein localises to the cytosol. It carries out the reaction an N(4)-(oligosaccharide-(1-&gt;3)-[oligosaccharide-(1-&gt;6)]-beta-D-Man-(1-&gt;4)-beta-D-GlcNAc-(1-&gt;4)-alpha-D-GlcNAc)-L-asparaginyl-[protein] + H2O = an oligosaccharide-(1-&gt;3)-[oligosaccharide-(1-&gt;6)]-beta-D-Man-(1-&gt;4)-D-GlcNAc + N(4)-(N-acetyl-beta-D-glucosaminyl)-L-asparaginyl-[protein]. Its function is as follows. Endoglycosidase that releases N-glycans from glycoproteins by cleaving the beta-1,4-glycosidic bond in the N,N'-diacetylchitobiose core. Involved in the processing of free oligosaccharides in the cytosol. This Gallus gallus (Chicken) protein is Cytosolic endo-beta-N-acetylglucosaminidase (ENGASE).